The sequence spans 87 residues: Phosphoribosyl-ATP pyrophosphatase (87 aa).

It belongs to the PRA-PH family.

It is found in the cytoplasm. It carries out the reaction 1-(5-phospho-beta-D-ribosyl)-ATP + H2O = 1-(5-phospho-beta-D-ribosyl)-5'-AMP + diphosphate + H(+). The protein operates within amino-acid biosynthesis; L-histidine biosynthesis; L-histidine from 5-phospho-alpha-D-ribose 1-diphosphate: step 2/9. The sequence is that of Phosphoribosyl-ATP pyrophosphatase from Leifsonia xyli subsp. xyli (strain CTCB07).